Consider the following 225-residue polypeptide: NAD(P)H-quinone oxidoreductase subunit K, chloroplastic (225 aa).

[4Fe-4S] cluster-binding residues include C43, C44, C108, and C139.

This sequence belongs to the complex I 20 kDa subunit family. NDH is composed of at least 16 different subunits, 5 of which are encoded in the nucleus. [4Fe-4S] cluster serves as cofactor.

The protein localises to the plastid. It localises to the chloroplast thylakoid membrane. The enzyme catalyses a plastoquinone + NADH + (n+1) H(+)(in) = a plastoquinol + NAD(+) + n H(+)(out). It catalyses the reaction a plastoquinone + NADPH + (n+1) H(+)(in) = a plastoquinol + NADP(+) + n H(+)(out). Its function is as follows. NDH shuttles electrons from NAD(P)H:plastoquinone, via FMN and iron-sulfur (Fe-S) centers, to quinones in the photosynthetic chain and possibly in a chloroplast respiratory chain. The immediate electron acceptor for the enzyme in this species is believed to be plastoquinone. Couples the redox reaction to proton translocation, and thus conserves the redox energy in a proton gradient. In Nuphar advena (Common spatterdock), this protein is NAD(P)H-quinone oxidoreductase subunit K, chloroplastic.